The following is a 463-amino-acid chain: Asparagine--tRNA ligase (463 aa).

This sequence belongs to the class-II aminoacyl-tRNA synthetase family. As to quaternary structure, homodimer.

The protein resides in the cytoplasm. The enzyme catalyses tRNA(Asn) + L-asparagine + ATP = L-asparaginyl-tRNA(Asn) + AMP + diphosphate + H(+). This is Asparagine--tRNA ligase from Clostridium acetobutylicum (strain ATCC 824 / DSM 792 / JCM 1419 / IAM 19013 / LMG 5710 / NBRC 13948 / NRRL B-527 / VKM B-1787 / 2291 / W).